Consider the following 253-residue polypeptide: Vitamin B12 import ATP-binding protein BtuD (253 aa).

Positions 3-237 constitute an ABC transporter domain; that stretch reads LDAKNLAMPP…EQLESTFATQ (235 aa). ATP is bound at residue 31 to 38; the sequence is GPNGSGKS.

Belongs to the ABC transporter superfamily. Vitamin B12 importer (TC 3.A.1.13.1) family. The complex is composed of two ATP-binding proteins (BtuD), two transmembrane proteins (BtuC) and a solute-binding protein (BtuF).

The protein resides in the cell inner membrane. It carries out the reaction an R-cob(III)alamin(out) + ATP + H2O = an R-cob(III)alamin(in) + ADP + phosphate + H(+). Functionally, part of the ABC transporter complex BtuCDF involved in vitamin B12 import. Responsible for energy coupling to the transport system. The sequence is that of Vitamin B12 import ATP-binding protein BtuD from Photobacterium profundum (strain SS9).